Consider the following 620-residue polypeptide: UvrABC system protein C (620 aa).

Positions 13–92 (DKPGVYIMKN…IKKYSPRYNI (80 aa)) constitute a GIY-YIG domain. Residues 204–239 (TSIIKKLKLEMEKAAEELEFEKAAKIRDRILAIELI) enclose the UVR domain.

Belongs to the UvrC family. In terms of assembly, interacts with UvrB in an incision complex.

The protein resides in the cytoplasm. In terms of biological role, the UvrABC repair system catalyzes the recognition and processing of DNA lesions. UvrC both incises the 5' and 3' sides of the lesion. The N-terminal half is responsible for the 3' incision and the C-terminal half is responsible for the 5' incision. In Clostridium perfringens (strain 13 / Type A), this protein is UvrABC system protein C.